The chain runs to 460 residues: Kynureninase (460 aa).

Pyridoxal 5'-phosphate contacts are provided by residues Leu-127, Thr-128, 165 to 168, Asp-249, His-252, and Tyr-274; that span reads FPSD. Lys-275 is modified (N6-(pyridoxal phosphate)lysine). Positions 304 and 332 each coordinate pyridoxal 5'-phosphate.

The protein belongs to the kynureninase family. Homodimer. Pyridoxal 5'-phosphate is required as a cofactor.

The protein resides in the cytoplasm. The catalysed reaction is L-kynurenine + H2O = anthranilate + L-alanine + H(+). The enzyme catalyses 3-hydroxy-L-kynurenine + H2O = 3-hydroxyanthranilate + L-alanine + H(+). It participates in amino-acid degradation; L-kynurenine degradation; L-alanine and anthranilate from L-kynurenine: step 1/1. Its pathway is cofactor biosynthesis; NAD(+) biosynthesis; quinolinate from L-kynurenine: step 2/3. In terms of biological role, catalyzes the cleavage of L-kynurenine (L-Kyn) and L-3-hydroxykynurenine (L-3OHKyn) into anthranilic acid (AA) and 3-hydroxyanthranilic acid (3-OHAA), respectively. The polypeptide is Kynureninase (Monosiga brevicollis (Choanoflagellate)).